Reading from the N-terminus, the 610-residue chain is Serine/threonine-protein kinase RCK2 (610 aa).

Disordered stretches follow at residues 1 to 55 (MLKI…QDKN) and 99 to 127 (TSVPAIDVHESSEGQLSSDPLISDESLSE). Residues 11-24 (KKPDQADLSQESKK) are compositionally biased toward basic and acidic residues. The segment covering 31-55 (RSSGTNNKDVSQITSSPKKSFQDKN) has biased composition (polar residues). 2 positions are modified to phosphoserine: S46 and S50. The Protein kinase domain maps to 163-478 (YKLINKIGEG…IDQFLDDPWL (316 aa)). Residue 169–177 (IGEGAFSKV) participates in ATP binding. A Phosphoserine modification is found at S187. K201 provides a ligand contact to ATP. D313 acts as the Proton acceptor in catalysis. T350 is modified (phosphothreonine). The interval 493–506 (KKAGTSERRHPHKK) is calmodulin-binding. Position 520 is a phosphoserine (S520). The segment at 541–564 (EDRMGTRGGLGSLAEDEELEDSYS) is disordered.

This sequence belongs to the protein kinase superfamily. CAMK Ser/Thr protein kinase family. CaMK subfamily. In terms of processing, autophosphorylated. Phosphorylated by HOG1 at Ser-520 after osmotic stress.

The protein localises to the cytoplasm. The enzyme catalyses L-seryl-[protein] + ATP = O-phospho-L-seryl-[protein] + ADP + H(+). The catalysed reaction is L-threonyl-[protein] + ATP = O-phospho-L-threonyl-[protein] + ADP + H(+). With respect to regulation, activated by Ser-520 phosphorylation by HOG1. Functionally, serine/threonine-protein kinase involved in a signal transduction pathway that is activated by changes in the osmolarity of the extracellular environment. The polypeptide is Serine/threonine-protein kinase RCK2 (RCK2) (Saccharomyces cerevisiae (strain ATCC 204508 / S288c) (Baker's yeast)).